A 126-amino-acid polypeptide reads, in one-letter code: Small ribosomal subunit protein uS13 (126 aa).

The segment at 92–126 is disordered; it reads HRRGLPVRGQRTKTNARTRKGPKKTVAGKKKATRK.

This sequence belongs to the universal ribosomal protein uS13 family. As to quaternary structure, part of the 30S ribosomal subunit. Forms a loose heterodimer with protein S19. Forms two bridges to the 50S subunit in the 70S ribosome.

Located at the top of the head of the 30S subunit, it contacts several helices of the 16S rRNA. In the 70S ribosome it contacts the 23S rRNA (bridge B1a) and protein L5 of the 50S subunit (bridge B1b), connecting the 2 subunits; these bridges are implicated in subunit movement. Contacts the tRNAs in the A and P-sites. The protein is Small ribosomal subunit protein uS13 of Deinococcus radiodurans (strain ATCC 13939 / DSM 20539 / JCM 16871 / CCUG 27074 / LMG 4051 / NBRC 15346 / NCIMB 9279 / VKM B-1422 / R1).